Reading from the N-terminus, the 579-residue chain is ERV-BabFcenv provirus ancestral Env polyprotein (579 aa).

The signal sequence occupies residues 1–22; sequence MISAVLNLPSTPLLPLLWFTLI. Residues 23–387 form a surface protein region; it reads IPASLTNPKF…LSSSNNIQKQ (365 aa). Over 23-523 the chain is Extracellular; that stretch reads IPASLTNPKF…VWLLPVVQQM (501 aa). N-linked (GlcNAc...) asparagine glycosylation is found at N135, N203, N242, and N251. Positions 255–258 match the CXXC motif; it reads CFLC. 3 N-linked (GlcNAc...) asparagine glycosylation sites follow: N276, N312, and N337. The interval 388–408 is fusion peptide; that stretch reads AVFLPLIIGVSLASSLVASGL. The interval 388–579 is transmembrane protein; it reads AVFLPLIIGV…LPTSDPNYAP (192 aa). Positions 453–469 match the CKS-17 motif; sequence AQNRRALDLLTAEKGGT. The cysteines at positions 470 and 477 are disulfide-linked. The short motif at 470-478 is the CX6CC element; it reads CLFLGEECC. N-linked (GlcNAc...) asparagine glycosylation is present at N482. A helical transmembrane segment spans residues 524–544; it reads LPFLIPILILCLMLCLAPILI. At 545–579 the chain is on the cytoplasmic side; sequence KFLRARVQEITRVTFNQMLLHPYTQLPTSDPNYAP.

Belongs to the gamma type-C retroviral envelope protein family. HERV class-I F(c)1 env subfamily. In terms of processing, specific enzymatic cleavages in vivo yield the mature SU and TM proteins. The CXXC motif is highly conserved across a broad range of retroviral envelope proteins. It is thought to participate in the formation of a labile disulfide bond possibly with the CX6CC motif present in the transmembrane domain.

It is found in the cell membrane. In terms of biological role, retroviral envelope proteins mediate receptor recognition and membrane fusion during early infection. Endogenous envelope proteins may have kept, lost or modified their original function during evolution. In Papio anubis (Olive baboon), this protein is ERV-BabFcenv provirus ancestral Env polyprotein.